A 527-amino-acid chain; its full sequence is Metal transporter Nramp6 (527 aa).

The next 12 helical transmembrane spans lie at 38–58 (FFSY…PGNF), 71–91 (ELLW…SLAA), 115–135 (FMLW…EVIG), 143–163 (LFNI…LILL), 173–193 (LEFL…VELH), 221–241 (ISLL…ALVL), 264–284 (GLAL…SGAV), 321–341 (LFAI…TYAG), 364–384 (CLAI…GAGK), 385–405 (LIII…VPLL), 427–447 (TWII…SSFI), and 458–478 (VAIV…LAAI).

The protein belongs to the NRAMP (TC 2.A.55) family. In terms of tissue distribution, expressed in the vascular bundles of shoots, cotyledons, young leaves, sepals and petals, at the top of the flower stem and in the style. Expressed in the peduncle of developing siliques as well as in the septum and the funiculi.

The protein resides in the endomembrane system. Functionally, probable intracellular cadmium (Cd) transporter that participates in the distribution or availability of Cd within the cell. The protein is Metal transporter Nramp6 (NRAMP6) of Arabidopsis thaliana (Mouse-ear cress).